Here is a 122-residue protein sequence, read N- to C-terminus: Large ribosomal subunit protein uL14 (122 aa).

The protein belongs to the universal ribosomal protein uL14 family. Part of the 50S ribosomal subunit. Forms a cluster with proteins L3 and L19. In the 70S ribosome, L14 and L19 interact and together make contacts with the 16S rRNA in bridges B5 and B8.

In terms of biological role, binds to 23S rRNA. Forms part of two intersubunit bridges in the 70S ribosome. This chain is Large ribosomal subunit protein uL14, found in Marinomonas sp. (strain MWYL1).